We begin with the raw amino-acid sequence, 419 residues long: Circumsporozoite protein (419 aa).

The N-terminal stretch at 1-23 (MKNFNLLAVSSILLVDLFRTHWG) is a signal peptide. The tract at residues 50–111 (AQVRQSASRG…GNAGGNAGGN (62 aa)) is disordered. Residues 65–95 (NPKEEDGADKKKKKDEKQVEPKKPRENKLKQ) are compositionally biased toward basic and acidic residues. Positions 81 to 89 (KQVEPKKPR) are required for the binding to heparan sulfate proteoglycans (HSPGs) on the surface of host hepatocytes. The interval 92–96 (KLKQP) is region I; contains the proteolytic cleavage site. Repeat copies occupy residues 99–102 (NADG), 103–106 (NAGG), 107–110 (NAGG), 111–114 (NAGG), 115–118 (NAGG), 119–122 (NAGG), 123–126 (NADG), 127–130 (NAGG), 131–134 (NAGG), 135–138 (NAGG), 139–142 (NAGG), 143–146 (NAGG), 147–150 (NADG), 151–154 (NAGG), 155–158 (NADG), 159–162 (NAGG), 163–166 (NADG), 167–170 (NAGG), 171–174 (NAGG), 175–178 (NAGG), 179–182 (NADG), 183–186 (NAGG), 187–190 (NAGG), 191–194 (NAGG), 195–198 (NAGG), 199–202 (NAGG), 203–206 (NAGG), 207–210 (NAGG), 211–214 (NADG), 215–218 (NAGG), 219–222 (NAGG), 223–226 (NAGG), 227–230 (NADG), 231–234 (NAGG), 235–238 (NAGG), 239–242 (NAGG), 243–246 (NAGG), and 247–250 (NAGG). Residues 99-314 (NADGNAGGNA…GGNAGANAGN (216 aa)) form a 54 X 4 AA approximate tandem repeats of N-A-G-G region. Residues 146-237 (GNADGNAGGN…ADGNAGGNAG (92 aa)) are disordered. The 39; approximate repeat unit spans residues 251–254 (TAGG). 13 repeat units span residues 255 to 258 (NADG), 259 to 262 (NAGG), 263 to 266 (NAGG), 267 to 270 (NAGG), 271 to 274 (NAGG), 275 to 278 (NAGG), 279 to 282 (NAGG), 283 to 286 (NAGG), 287 to 290 (NAGG), 291 to 294 (NAGG), 295 to 298 (NAGG), 299 to 302 (NAGG), and 303 to 306 (NAGG). A 53; approximate repeat occupies 307 to 310 (NAGA). The 54; approximate repeat unit spans residues 311–314 (NAGN). The segment at 312–332 (AGNKKAGDAGAGQGQNNEAAN) is disordered. In terms of domain architecture, TSP type-1 spans 345-397 (KIRSTISTEWSPCSVTCGKGVRMRKKVSAANKKPEELDVNDLETEVCTMDKCA). 2 cysteine pairs are disulfide-bonded: Cys357-Cys391 and Cys361-Cys396. Thr360 is a glycosylation site (O-linked (Fuc) threonine). Residue Cys396 is the site of GPI-anchor amidated cysteine attachment. Residues 397–419 (AGIFNVVSNSLRLVILLVLALFN) constitute a propeptide, removed in mature form.

Belongs to the plasmodium circumsporozoite protein family. In terms of processing, during host cell invasion, proteolytically cleaved at the cell membrane in the region I by a papain-like cysteine protease of parasite origin. Cleavage is triggered by the sporozoite contact with highly sulfated heparan sulfate proteoglycans (HSPGs) present on the host hepatocyte cell surface. Cleavage exposes the TSP type-1 (TSR) domain and is required for productive invasion of host hepatocytes but not for adhesion to the host cell membrane. Cleavage is dispensable for sporozoite development in the oocyst, motility and for traversal of host and vector cells. O-glycosylated; maybe by POFUT2.

The protein localises to the cell membrane. It is found in the cytoplasm. In terms of biological role, essential sporozoite protein. In the mosquito vector, required for sporozoite development in the oocyst, migration through the vector hemolymph and entry into the vector salivary glands. In the vertebrate host, required for sporozoite migration through the host dermis and infection of host hepatocytes. Binds to highly sulfated heparan sulfate proteoglycans (HSPGs) on the surface of host hepatocytes. In the vertebrate host, binds to highly sulfated heparan sulfate proteoglycans (HSPGs) on the surface of host hepatocytes and is required for sporozoite invasion of the host hepatocytes. This Plasmodium cynomolgi (strain Mulligan/NIH) protein is Circumsporozoite protein.